Here is a 105-residue protein sequence, read N- to C-terminus: Large ribosomal subunit protein uL24 (105 aa).

The protein belongs to the universal ribosomal protein uL24 family. In terms of assembly, part of the 50S ribosomal subunit.

In terms of biological role, one of two assembly initiator proteins, it binds directly to the 5'-end of the 23S rRNA, where it nucleates assembly of the 50S subunit. Its function is as follows. One of the proteins that surrounds the polypeptide exit tunnel on the outside of the subunit. This chain is Large ribosomal subunit protein uL24, found in Chromohalobacter salexigens (strain ATCC BAA-138 / DSM 3043 / CIP 106854 / NCIMB 13768 / 1H11).